The sequence spans 137 residues: 3-hydroxyacyl-[acyl-carrier-protein] dehydratase FabZ (137 aa).

Residue His46 is part of the active site.

Belongs to the thioester dehydratase family. FabZ subfamily.

It is found in the cytoplasm. The enzyme catalyses a (3R)-hydroxyacyl-[ACP] = a (2E)-enoyl-[ACP] + H2O. Its function is as follows. Involved in unsaturated fatty acids biosynthesis. Catalyzes the dehydration of short chain beta-hydroxyacyl-ACPs and long chain saturated and unsaturated beta-hydroxyacyl-ACPs. The sequence is that of 3-hydroxyacyl-[acyl-carrier-protein] dehydratase FabZ from Thermotoga maritima (strain ATCC 43589 / DSM 3109 / JCM 10099 / NBRC 100826 / MSB8).